The primary structure comprises 113 residues: Small ribosomal subunit protein eS24 (113 aa).

It belongs to the eukaryotic ribosomal protein eS24 family.

This Metallosphaera sedula (strain ATCC 51363 / DSM 5348 / JCM 9185 / NBRC 15509 / TH2) protein is Small ribosomal subunit protein eS24.